Reading from the N-terminus, the 364-residue chain is DNA replication and repair protein RecF (364 aa).

Position 33-40 (33-40 (GENGSGKT)) interacts with ATP.

It belongs to the RecF family.

It is found in the cytoplasm. Its function is as follows. The RecF protein is involved in DNA metabolism; it is required for DNA replication and normal SOS inducibility. RecF binds preferentially to single-stranded, linear DNA. It also seems to bind ATP. This is DNA replication and repair protein RecF from Rickettsia felis (strain ATCC VR-1525 / URRWXCal2) (Rickettsia azadi).